A 625-amino-acid chain; its full sequence is Threonine--tRNA ligase (625 aa).

Positions 1–147 (MRMLLIHSDY…TIVPEEAKVE (147 aa)) are editing domain. The tract at residues 206–505 (PHVRLMLEHE…MQEGKKPMFP (300 aa)) is catalytic. The Zn(2+) site is built by C298, H350, and H474.

Belongs to the class-II aminoacyl-tRNA synthetase family. In terms of assembly, homodimer. Zn(2+) serves as cofactor.

The protein resides in the cytoplasm. It catalyses the reaction tRNA(Thr) + L-threonine + ATP = L-threonyl-tRNA(Thr) + AMP + diphosphate + H(+). Its function is as follows. Catalyzes the attachment of threonine to tRNA(Thr) in a two-step reaction: L-threonine is first activated by ATP to form Thr-AMP and then transferred to the acceptor end of tRNA(Thr). Also edits incorrectly charged L-seryl-tRNA(Thr). This is Threonine--tRNA ligase from Pyrococcus furiosus (strain ATCC 43587 / DSM 3638 / JCM 8422 / Vc1).